A 446-amino-acid polypeptide reads, in one-letter code: Phosphoglucosamine mutase (446 aa).

The active-site Phosphoserine intermediate is the S100. Mg(2+)-binding residues include S100, D241, D243, and D245. Phosphoserine is present on S100.

It belongs to the phosphohexose mutase family. The cofactor is Mg(2+). Activated by phosphorylation.

The catalysed reaction is alpha-D-glucosamine 1-phosphate = D-glucosamine 6-phosphate. Its function is as follows. Catalyzes the conversion of glucosamine-6-phosphate to glucosamine-1-phosphate. The polypeptide is Phosphoglucosamine mutase (Methylobacterium sp. (strain 4-46)).